Consider the following 258-residue polypeptide: Phosphate import ATP-binding protein PstB (258 aa).

The 243-residue stretch at 5–247 (IDVSGLTAYY…ERIFSNPSVQ (243 aa)) folds into the ABC transporter domain. 37-44 (GPSGCGKS) contributes to the ATP binding site.

The protein belongs to the ABC transporter superfamily. Phosphate importer (TC 3.A.1.7) family. As to quaternary structure, the complex is composed of two ATP-binding proteins (PstB), two transmembrane proteins (PstC and PstA) and a solute-binding protein (PstS).

The protein resides in the cell membrane. The enzyme catalyses phosphate(out) + ATP + H2O = ADP + 2 phosphate(in) + H(+). Part of the ABC transporter complex PstSACB involved in phosphate import. Responsible for energy coupling to the transport system. This chain is Phosphate import ATP-binding protein PstB, found in Streptomyces avermitilis (strain ATCC 31267 / DSM 46492 / JCM 5070 / NBRC 14893 / NCIMB 12804 / NRRL 8165 / MA-4680).